Consider the following 874-residue polypeptide: Valine--tRNA ligase (874 aa).

The short motif at P51–H61 is the 'HIGH' region element. A 'KMSKS' region motif is present at residues K533–S537. K536 contacts ATP. A coiled-coil region spans residues L813–Q873.

Belongs to the class-I aminoacyl-tRNA synthetase family. ValS type 1 subfamily. As to quaternary structure, monomer.

It is found in the cytoplasm. The enzyme catalyses tRNA(Val) + L-valine + ATP = L-valyl-tRNA(Val) + AMP + diphosphate. Functionally, catalyzes the attachment of valine to tRNA(Val). As ValRS can inadvertently accommodate and process structurally similar amino acids such as threonine, to avoid such errors, it has a 'posttransfer' editing activity that hydrolyzes mischarged Thr-tRNA(Val) in a tRNA-dependent manner. The chain is Valine--tRNA ligase from Helicobacter pylori (strain ATCC 700392 / 26695) (Campylobacter pylori).